A 311-amino-acid chain; its full sequence is Malate dehydrogenase (311 aa).

Residues 7 to 13 (GAAGGIG) and aspartate 34 contribute to the NAD(+) site. Residues arginine 81 and arginine 87 each coordinate substrate. NAD(+) is bound by residues asparagine 94 and 117-119 (ITN). Asparagine 119 and arginine 153 together coordinate substrate. Histidine 177 serves as the catalytic Proton acceptor. Methionine 227 serves as a coordination point for NAD(+).

It belongs to the LDH/MDH superfamily. MDH type 1 family. Homodimer.

The catalysed reaction is (S)-malate + NAD(+) = oxaloacetate + NADH + H(+). Its function is as follows. Catalyzes the reversible oxidation of malate to oxaloacetate. This Erwinia tasmaniensis (strain DSM 17950 / CFBP 7177 / CIP 109463 / NCPPB 4357 / Et1/99) protein is Malate dehydrogenase.